A 349-amino-acid chain; its full sequence is Paired box protein Pax-4 (349 aa).

Residues 5–131 constitute a DNA-binding region (paired); the sequence is GLSSVNQLGG…SSINRVLRAL (127 aa). The PAI subdomain stretch occupies residues 8 to 64; sequence SVNQLGGLFVNGRPLPLDTRQQIVQLAIRGMRPCDISRSLKVSNGCVSKILGRYYRT. Residues 83-131 are RED subdomain; that stretch reads AVVARIAQLKDEYPALFAWEIQHQLCTEGLCTQDKAPSVSSINRVLRAL. The homeobox DNA-binding region spans 170-229; it reads SHRNRTIFSPGQAEALEKEFQRGQYPDSVARGKLAAATSLPEDTVRVWFSNRRAKWRRQE. Residues 278 to 349 are transcription repression; sequence FCQLCCGTAP…VPSTHCSNWP (72 aa).

The protein belongs to the paired homeobox family. In terms of tissue distribution, expressed in early pancreas. Later restricted to beta cells. Undetectable in adult islets.

It is found in the nucleus. Functionally, plays an important role in the differentiation and development of pancreatic islet beta cells. Transcriptional repressor that competes with PAX6 in binding to a common element in the glucagon, insulin and somatostatin promoters. The sequence is that of Paired box protein Pax-4 (Pax4) from Mus musculus (Mouse).